A 394-amino-acid polypeptide reads, in one-letter code: 1-deoxy-D-xylulose 5-phosphate reductoisomerase (394 aa).

Positions 12, 13, 14, 15, 38, 41, and 132 each coordinate NADPH. Position 133 (lysine 133) interacts with 1-deoxy-D-xylulose 5-phosphate. Residue glutamate 134 participates in NADPH binding. Residue aspartate 156 coordinates Mn(2+). 1-deoxy-D-xylulose 5-phosphate contacts are provided by serine 157, glutamate 158, serine 182, and histidine 205. Position 158 (glutamate 158) interacts with Mn(2+). An NADPH-binding site is contributed by glycine 211. Serine 218, asparagine 223, lysine 224, and glutamate 227 together coordinate 1-deoxy-D-xylulose 5-phosphate. Glutamate 227 is a binding site for Mn(2+).

It belongs to the DXR family. The cofactor is Mg(2+). Requires Mn(2+) as cofactor.

The catalysed reaction is 2-C-methyl-D-erythritol 4-phosphate + NADP(+) = 1-deoxy-D-xylulose 5-phosphate + NADPH + H(+). It participates in isoprenoid biosynthesis; isopentenyl diphosphate biosynthesis via DXP pathway; isopentenyl diphosphate from 1-deoxy-D-xylulose 5-phosphate: step 1/6. In terms of biological role, catalyzes the NADPH-dependent rearrangement and reduction of 1-deoxy-D-xylulose-5-phosphate (DXP) to 2-C-methyl-D-erythritol 4-phosphate (MEP). The polypeptide is 1-deoxy-D-xylulose 5-phosphate reductoisomerase (Paenarthrobacter aurescens (strain TC1)).